The chain runs to 179 residues: M-zodatoxin-Lt4b (179 aa).

The first 22 residues, 1-22 (MKFSIIALALAVAFVCVAESRS), serve as a signal peptide directing secretion. Positions 23–43 (EEEGYDVSEEIQAEELEEAAR) are excised as a propeptide. The Processing quadruplet motif 1 motif lies at 40–43 (EAAR). Glutamine amide is present on Gln-61. Positions 63 to 66 (REDS) match the Inverted processing quadruplet motif 1 motif. A propeptide spanning residues 63–71 (REDSEDAGR) is cleaved from the precursor. The Processing quadruplet motif 2 signature appears at 68–71 (DAGR). Position 89 is a glutamine amide (Gln-89). The Inverted processing quadruplet motif 2 motif lies at 91-94 (REDT). Residues 91 to 99 (REDTEEAGR) constitute a propeptide that is removed on maturation. The Processing quadruplet motif 3 motif lies at 96 to 99 (EAGR). The residue at position 117 (Gln-117) is a Glutamine amide. The Inverted processing quadruplet motif 3 signature appears at 119–122 (REDS). The propeptide occupies 119 to 127 (REDSEEAGR). Positions 124 to 127 (EAGR) match the Processing quadruplet motif 4 motif. Gln-145 bears the Glutamine amide mark. Residues 147-150 (REDT) carry the Inverted processing quadruplet motif 4 motif. A propeptide spanning residues 147-154 (REDTEEAR) is cleaved from the precursor. The short motif at 151–154 (EEAR) is the Processing quadruplet motif 5 element. Position 178 is a phenylalanine amide (Phe-178).

This sequence belongs to the cationic peptide 03 (latarcin) family. 04 subfamily. Cleavage of the propeptide depends on the processing quadruplet motif (PQM) (XXXR, with at least one of X being E) and the inverted PQM (RXXX, with at least one of X being E). As to expression, expressed by the venom gland.

It localises to the secreted. In terms of biological role, M-zodatoxin-Lt4b: Has antimicrobial activity against Gram-positive bacteria (A.globiformis VKM Ac-1112 (MIC=0.3 uM), and B.subtilis VKM B-501 (MIC=1.1 uM)), Gram-negative bacteria (E.coli DH5-alpha (MIC=4.4 uM), E.coli MH1 (MIC=4.4 uM), and P.aeruginosa PAO1 (MIC=&gt;35 uM)), and yeasts (P.pastoris GS115 (MIC=&gt;35 uM), and S.cerevisiae Y190 (MIC=35 uM)). Does not have hemolytic activity against rabbit erythrocytes. Causes paralysis, but is not lethal when injected into insect (M.domestica) larvae. Shows no antimicrobial activity against Gram-positive bacterium B.subtilis B-501 or Gram-negative bacterium E.coli DH5-alpha at concentration up to 20 uM. The polypeptide is M-zodatoxin-Lt4b (Lachesana tarabaevi (Spider)).